The primary structure comprises 215 residues: Peroxiredoxin 1 (215 aa).

Residues 2–158 (VKLYSKFPDV…LLRITKAAIV (157 aa)) form the Thioredoxin domain. C46 acts as the Cysteine sulfenic acid (-SOH) intermediate in catalysis. Residue R121 participates in substrate binding.

It belongs to the peroxiredoxin family. Prx6 subfamily. As to quaternary structure, homodecamer. Pentamer of dimers that assemble into a ring structure.

The protein resides in the cytoplasm. It carries out the reaction a hydroperoxide + [thioredoxin]-dithiol = an alcohol + [thioredoxin]-disulfide + H2O. Its function is as follows. Thiol-specific peroxidase that catalyzes the reduction of hydrogen peroxide and organic hydroperoxides to water and alcohols, respectively. Plays a role in cell protection against oxidative stress by detoxifying peroxides. This is Peroxiredoxin 1 from Sulfurisphaera tokodaii (strain DSM 16993 / JCM 10545 / NBRC 100140 / 7) (Sulfolobus tokodaii).